The following is a 646-amino-acid chain: Phosphomethylpyrimidine synthase (646 aa).

Residues N235, M264, Y293, H329, 349–351, 390–393, and E429 each bind substrate; these read SRG and DGLR. H433 is a Zn(2+) binding site. Residue Y456 coordinates substrate. H497 provides a ligand contact to Zn(2+). [4Fe-4S] cluster is bound by residues C577, C580, and C585.

Belongs to the ThiC family. Homodimer. Requires [4Fe-4S] cluster as cofactor.

It carries out the reaction 5-amino-1-(5-phospho-beta-D-ribosyl)imidazole + S-adenosyl-L-methionine = 4-amino-2-methyl-5-(phosphooxymethyl)pyrimidine + CO + 5'-deoxyadenosine + formate + L-methionine + 3 H(+). It functions in the pathway cofactor biosynthesis; thiamine diphosphate biosynthesis. Its function is as follows. Catalyzes the synthesis of the hydroxymethylpyrimidine phosphate (HMP-P) moiety of thiamine from aminoimidazole ribotide (AIR) in a radical S-adenosyl-L-methionine (SAM)-dependent reaction. The chain is Phosphomethylpyrimidine synthase from Vibrio campbellii (strain ATCC BAA-1116).